A 503-amino-acid chain; its full sequence is Maturase K (503 aa).

It belongs to the intron maturase 2 family. MatK subfamily.

Its subcellular location is the plastid. It localises to the chloroplast. Its function is as follows. Usually encoded in the trnK tRNA gene intron. Probably assists in splicing its own and other chloroplast group II introns. This chain is Maturase K, found in Panax ginseng (Korean ginseng).